Reading from the N-terminus, the 220-residue chain is Thiopurine S-methyltransferase (220 aa).

W10, L45, E66, and R123 together coordinate S-adenosyl-L-methionine.

The protein belongs to the class I-like SAM-binding methyltransferase superfamily. TPMT family.

The protein resides in the cytoplasm. It catalyses the reaction S-adenosyl-L-methionine + a thiopurine = S-adenosyl-L-homocysteine + a thiopurine S-methylether.. The chain is Thiopurine S-methyltransferase from Nitrosospira multiformis (strain ATCC 25196 / NCIMB 11849 / C 71).